Here is a 74-residue protein sequence, read N- to C-terminus: Turripeptide OL135 (74 aa).

A signal peptide spans 1-20; sequence MKVPIVLMLVLLLIMPLSDG. Positions 21–28 are excised as a propeptide; the sequence is YERKRXXX.

It belongs to the conopeptide P-like superfamily. Post-translationally, contains 3 disulfide bonds. In terms of tissue distribution, expressed by the venom duct.

The protein resides in the secreted. In terms of biological role, acts as a neurotoxin by inhibiting an ion channel. This Iotyrris olangoensis (Sea snail) protein is Turripeptide OL135.